The sequence spans 243 residues: MVLEATMILIDNSEWMINGDYIPTRFEAQKDTVHMIFNQKINDNPENMCGLMTIGDNSPQVLSTLTRDYGKFLSAMHDLPVRGNAKFGDGIQIAQLALKHRENKIQRQRIVAFVGSPIVEDEKNLIRLAKRMKKNNVAIDIIHIGELQNESALQHFIDAANSSDSCHLVSIPPSPQLLSDLVNQSPIGQGVVASQNQFEYGVDPNLDVELALALELSMAEERARQEVAAQKSSEETEDKKMQE.

The VWFA domain occupies Ala5 to Ser185. A UIM domain is found at Asn205–Arg224. Residues Ala223–Glu243 form a disordered region. A compositionally biased stretch (basic and acidic residues) spans Ser232–Glu243.

It belongs to the proteasome subunit S5A family. As to quaternary structure, the 26S proteasome is composed of a core protease, known as the 20S proteasome, capped at one or both ends by the 19S regulatory complex (RC). The RC is composed of at least 18 different subunits in two subcomplexes, the base and the lid, which form the portions proximal and distal to the 20S proteolytic core, respectively. Interacts with uch2.

The protein resides in the nucleus. In terms of biological role, protects ubiquitin chains against dissambly by deubiquitinating enzymes thereby promoting protein degradation. The protein is 26S proteasome regulatory subunit rpn10 (rpn10) of Schizosaccharomyces pombe (strain 972 / ATCC 24843) (Fission yeast).